The following is a 360-amino-acid chain: Photosystem II protein D1 (360 aa).

A run of 3 helical transmembrane segments spans residues 29–46, 118–133, and 142–156; these read YIGWFGCLMFPTLLSAIS, HFFIGVCAYIGREWEL, and WICVAFSAPVAAAAA. H118 serves as a coordination point for chlorophyll a. Y126 contacts pheophytin a. [CaMn4O5] cluster contacts are provided by D170 and E189. Residues 197–218 traverse the membrane as a helical segment; that stretch reads FHMLGVAGVFGGSLFSAMHGSL. H198 serves as a coordination point for chlorophyll a. Residues H215 and 264–265 each bind a quinone; that span reads SF. Residue H215 participates in Fe cation binding. H272 is a binding site for Fe cation. Residues 274–288 traverse the membrane as a helical segment; it reads FLGAWPVVGIWFTAM. Positions 332, 333, 342, and 344 each coordinate [CaMn4O5] cluster. A propeptide spanning residues 345–360 is cleaved from the precursor; sequence AGESLPVALVAPAVAA.

It belongs to the reaction center PufL/M/PsbA/D family. PSII is composed of 1 copy each of membrane proteins PsbA, PsbB, PsbC, PsbD, PsbE, PsbF, PsbH, PsbI, PsbJ, PsbK, PsbL, PsbM, PsbT, PsbX, PsbY, PsbZ, Psb30/Ycf12, at least 3 peripheral proteins of the oxygen-evolving complex and a large number of cofactors. It forms dimeric complexes. The D1/D2 heterodimer binds P680, chlorophylls that are the primary electron donor of PSII, and subsequent electron acceptors. It shares a non-heme iron and each subunit binds pheophytin, quinone, additional chlorophylls, carotenoids and lipids. D1 provides most of the ligands for the Mn4-Ca-O5 cluster of the oxygen-evolving complex (OEC). There is also a Cl(-1) ion associated with D1 and D2, which is required for oxygen evolution. The PSII complex binds additional chlorophylls, carotenoids and specific lipids. serves as cofactor. Post-translationally, tyr-161 forms a radical intermediate that is referred to as redox-active TyrZ, YZ or Y-Z. In terms of processing, C-terminally processed by CTPA; processing is essential to allow assembly of the oxygen-evolving complex and thus photosynthetic growth.

The protein localises to the plastid. The protein resides in the chloroplast thylakoid membrane. It carries out the reaction 2 a plastoquinone + 4 hnu + 2 H2O = 2 a plastoquinol + O2. In terms of biological role, photosystem II (PSII) is a light-driven water:plastoquinone oxidoreductase that uses light energy to abstract electrons from H(2)O, generating O(2) and a proton gradient subsequently used for ATP formation. It consists of a core antenna complex that captures photons, and an electron transfer chain that converts photonic excitation into a charge separation. The D1/D2 (PsbA/PsbD) reaction center heterodimer binds P680, the primary electron donor of PSII as well as several subsequent electron acceptors. This is Photosystem II protein D1 from Emiliania huxleyi (Coccolithophore).